A 441-amino-acid chain; its full sequence is Anti-sigma-I factor RsgI (441 aa).

The Cytoplasmic portion of the chain corresponds to 1–53 (MMNKGIVMDIKKHSVVVLTPNGEFITCKRKGDSCMIGEEISFDEQEQKASRFS). A RsgI N-terminal anti-sigma domain is found at 3-51 (NKGIVMDIKKHSVVVLTPNGEFITCKRKGDSCMIGEEISFDEQEQKASR). The helical transmembrane segment at 54–76 (IPYFLKPASLLVACFLCALLFFY) threads the bilayer. The Extracellular segment spans residues 77–441 (NQPEEKVFAY…HQQGNEKKNQ (365 aa)). Residues 213–441 (ENEKNKSVTP…HQQGNEKKNQ (229 aa)) form a disordered region. Residues 219 to 230 (SVTPPATPSNPV) are compositionally biased toward polar residues. Low complexity predominate over residues 240-251 (PDSSPDVVPDLS). The segment covering 252–281 (SVKDKKYEKPEYKEQKKIEEQPTKQIKENN) has biased composition (basic and acidic residues). 3 stretches are compositionally biased toward low complexity: residues 282 to 328 (GRGS…QQGN), 336 to 358 (NNGH…QQGN), and 366 to 408 (NNGH…NGRG). Positions 411 to 428 (KENVGNEQGNNGRGSQQE) are enriched in polar residues. The segment covering 429–441 (NRGHQQGNEKKNQ) has biased composition (basic and acidic residues).

Interacts (via RsgI N-terminal anti-sigma domain) with SigI.

The protein resides in the cell membrane. Functionally, anti-sigma factor for SigI. Negatively regulates SigI activity through direct interaction. Has no direct effect on virulence gene expression. The polypeptide is Anti-sigma-I factor RsgI (Bacillus anthracis).